The following is an 83-amino-acid chain: Protein ShK-like4 (83 aa).

Positions 1 to 21 (MDTRVIAVLFVAIMVLSSTNA) are cleaved as a signal peptide. Positions 22-48 (LPKQKGSYKNMNHADFLKGLDRASSKR) are excised as a propeptide. 3 disulfides stabilise this stretch: Cys-50–Cys-82, Cys-57–Cys-75, and Cys-67–Cys-79. In terms of domain architecture, ShKT spans 50–83 (CRDSHWSCFFQSNYEDICSTAQAEECALSCGLCE).

Contains 3 disulfide bonds. In terms of tissue distribution, expressed in various neurons (ectodermal sensory cells) (in planulae and primary polyps). Not expressed in nematocytes.

Functionally, probable neuropeptide. This is Protein ShK-like4 from Nematostella vectensis (Starlet sea anemone).